The following is a 671-amino-acid chain: tRNA 5-methylaminomethyl-2-thiouridine biosynthesis bifunctional protein MnmC (671 aa).

Residues 1–245 (MVNVMNTLSF…KREMLWGEKP (245 aa)) are tRNA (mnm(5)s(2)U34)-methyltransferase. An FAD-dependent cmnm(5)s(2)U34 oxidoreductase region spans residues 272–671 (VGGGVASLFV…RKLLKGSKVE (400 aa)).

This sequence in the N-terminal section; belongs to the methyltransferase superfamily. tRNA (mnm(5)s(2)U34)-methyltransferase family. The protein in the C-terminal section; belongs to the DAO family. It depends on FAD as a cofactor.

The protein localises to the cytoplasm. The catalysed reaction is 5-aminomethyl-2-thiouridine(34) in tRNA + S-adenosyl-L-methionine = 5-methylaminomethyl-2-thiouridine(34) in tRNA + S-adenosyl-L-homocysteine + H(+). Catalyzes the last two steps in the biosynthesis of 5-methylaminomethyl-2-thiouridine (mnm(5)s(2)U) at the wobble position (U34) in tRNA. Catalyzes the FAD-dependent demodification of cmnm(5)s(2)U34 to nm(5)s(2)U34, followed by the transfer of a methyl group from S-adenosyl-L-methionine to nm(5)s(2)U34, to form mnm(5)s(2)U34. The sequence is that of tRNA 5-methylaminomethyl-2-thiouridine biosynthesis bifunctional protein MnmC from Actinobacillus pleuropneumoniae serotype 3 (strain JL03).